The primary structure comprises 50 residues: AAPSKATVGESGIITPGGRLIQLPHGVSIILEGPSAALLSNGDFVTYESS.

2 repeat units span residues 6-23 (ATVG…LIQL) and 30-47 (ILEG…FVTY).

In terms of tissue distribution, calcified shell.

This Cancer pagurus (Rock crab) protein is Cuticle protein CP498.